The following is a 344-amino-acid chain: S-adenosylmethionine:tRNA ribosyltransferase-isomerase (344 aa).

The protein belongs to the QueA family. In terms of assembly, monomer.

The protein localises to the cytoplasm. The enzyme catalyses 7-aminomethyl-7-carbaguanosine(34) in tRNA + S-adenosyl-L-methionine = epoxyqueuosine(34) in tRNA + adenine + L-methionine + 2 H(+). Its pathway is tRNA modification; tRNA-queuosine biosynthesis. Functionally, transfers and isomerizes the ribose moiety from AdoMet to the 7-aminomethyl group of 7-deazaguanine (preQ1-tRNA) to give epoxyqueuosine (oQ-tRNA). This Thiobacillus denitrificans (strain ATCC 25259 / T1) protein is S-adenosylmethionine:tRNA ribosyltransferase-isomerase.